A 249-amino-acid polypeptide reads, in one-letter code: uncharacterized protein (249 aa).

11-34 (IFGGRSQIGGELARRLAAGATMVL) serves as a coordination point for NADP(+). Serine 142 serves as a coordination point for substrate. Tyrosine 155 functions as the Proton acceptor in the catalytic mechanism.

The protein belongs to the short-chain dehydrogenases/reductases (SDR) family.

This is an uncharacterized protein from Mycobacterium tuberculosis (strain ATCC 25618 / H37Rv).